The primary structure comprises 131 residues: Fumarate reductase subunit C (131 aa).

3 helical membrane-spanning segments follow: residues 30 to 50, 57 to 77, and 109 to 129; these read EGTAVPAVWFSIELIFGLFAL, WMGFVGFLQNPVVVILNLITL, and IIKGLWVVTAVVTVVILYVAL.

This sequence belongs to the FrdC family. As to quaternary structure, part of an enzyme complex containing four subunits: a flavoprotein (FrdA), an iron-sulfur protein (FrdB), and two hydrophobic anchor proteins (FrdC and FrdD).

Its subcellular location is the cell inner membrane. In terms of biological role, two distinct, membrane-bound, FAD-containing enzymes are responsible for the catalysis of fumarate and succinate interconversion; fumarate reductase is used in anaerobic growth, and succinate dehydrogenase is used in aerobic growth. Anchors the catalytic components of the fumarate reductase complex to the cell inner membrane, binds quinones. This Salmonella choleraesuis (strain SC-B67) protein is Fumarate reductase subunit C.